The primary structure comprises 279 residues: Diaminopimelate epimerase (279 aa).

Asn13 and Asn66 together coordinate substrate. Cys75 acts as the Proton donor in catalysis. Residues 76 to 77 (GN), Asn162, Asn195, and 213 to 214 (ER) each bind substrate. The active-site Proton acceptor is Cys222. 223 to 224 (GT) contacts substrate.

Belongs to the diaminopimelate epimerase family. Homodimer.

Its subcellular location is the cytoplasm. The catalysed reaction is (2S,6S)-2,6-diaminopimelate = meso-2,6-diaminopimelate. It participates in amino-acid biosynthesis; L-lysine biosynthesis via DAP pathway; DL-2,6-diaminopimelate from LL-2,6-diaminopimelate: step 1/1. In terms of biological role, catalyzes the stereoinversion of LL-2,6-diaminopimelate (L,L-DAP) to meso-diaminopimelate (meso-DAP), a precursor of L-lysine and an essential component of the bacterial peptidoglycan. The polypeptide is Diaminopimelate epimerase (Synechocystis sp. (strain ATCC 27184 / PCC 6803 / Kazusa)).